The sequence spans 221 residues: Large ribosomal subunit protein uL3 (221 aa).

The interval 123-156 is disordered; that stretch reads GFAGSIKRHNQSRGPESHGSRYHRRPGSMGPIKG.

Belongs to the universal ribosomal protein uL3 family. Part of the 50S ribosomal subunit. Forms a cluster with proteins L14 and L19.

Its function is as follows. One of the primary rRNA binding proteins, it binds directly near the 3'-end of the 23S rRNA, where it nucleates assembly of the 50S subunit. The chain is Large ribosomal subunit protein uL3 from Aster yellows witches'-broom phytoplasma (strain AYWB).